Consider the following 291-residue polypeptide: Shikimate dehydrogenase (NADP(+)) (291 aa).

Shikimate contacts are provided by residues 22–24 (SLS) and T69. Catalysis depends on K73, which acts as the Proton acceptor. Residues N94 and D110 each contribute to the shikimate site. Residues 131 to 135 (GSGGA) and L226 contribute to the NADP(+) site. Residue Y228 coordinates shikimate. G249 contributes to the NADP(+) binding site.

Belongs to the shikimate dehydrogenase family. Homodimer.

It catalyses the reaction shikimate + NADP(+) = 3-dehydroshikimate + NADPH + H(+). The protein operates within metabolic intermediate biosynthesis; chorismate biosynthesis; chorismate from D-erythrose 4-phosphate and phosphoenolpyruvate: step 4/7. Involved in the biosynthesis of the chorismate, which leads to the biosynthesis of aromatic amino acids. Catalyzes the reversible NADPH linked reduction of 3-dehydroshikimate (DHSA) to yield shikimate (SA). The polypeptide is Shikimate dehydrogenase (NADP(+)) (Synechococcus sp. (strain JA-3-3Ab) (Cyanobacteria bacterium Yellowstone A-Prime)).